Consider the following 266-residue polypeptide: Non-structural maintenance of chromosomes element 1 homolog (266 aa).

The interaction with NSMCE3 stretch occupies residues 1 to 102 (MQGSTRRMSV…SISKMATDFA (102 aa)). The RING-type; atypical zinc finger occupies 191 to 232 (CNICHSLLIQGQSCETCGIRMHLPCVAKYFQSNAEPRCPHCN). The segment at 245–266 (PEKERESGVSKSNKKSLRSRQH) is disordered. Phosphoserine is present on Ser251. Over residues 256–266 (SNKKSLRSRQH) the composition is skewed to basic residues.

Belongs to the NSE1 family. Component of the SMC5-SMC6 complex which consists at least of SMC5, SMC6, NSMCE2, NSMCE1, NSMCE4A or EID3 and NSMCE3. NSMCE1, NSMCE4A or EID3 and NSMCE3 probably form a subcomplex that bridges the head domains of the SMC5-SMC6 heterodimer. Interacts with NSMCE3. Post-translationally, ubiquitinated.

Its subcellular location is the nucleus. It is found in the chromosome. It localises to the telomere. The enzyme catalyses S-ubiquitinyl-[E2 ubiquitin-conjugating enzyme]-L-cysteine + [acceptor protein]-L-lysine = [E2 ubiquitin-conjugating enzyme]-L-cysteine + N(6)-ubiquitinyl-[acceptor protein]-L-lysine.. Functionally, RING-type zinc finger-containing E3 ubiquitin ligase that assembles with melanoma antigen protein (MAGE) to catalyze the direct transfer of ubiquitin from E2 ubiquitin-conjugating enzyme to a specific substrate. Within MAGE-RING ubiquitin ligase complex, MAGE stimulates and specifies ubiquitin ligase activity likely through recruitment and/or stabilization of the E2 ubiquitin-conjugating enzyme at the E3:substrate complex. Involved in maintenance of genome integrity, DNA damage response and DNA repair. NSMCE3/MAGEG1 and NSMCE1 ubiquitin ligase are components of SMC5-SMC6 complex and may positively regulate homologous recombination-mediated DNA repair. This Pongo abelii (Sumatran orangutan) protein is Non-structural maintenance of chromosomes element 1 homolog (NSMCE1).